A 124-amino-acid chain; its full sequence is Putative calmodulin-3 (124 aa).

4 EF-hand domains span residues 1–18, 19–54, 56–91, and 92–124; these read GCITTKELGTVMRSLGQN, PTEAELQDMINEVDADGNGTIDFPEFLNLMARKIKD, DFEEELKEAFRVFDKDRNGFISAAELPHVMTNLGEK, and LTDEEVDEIIREADVDCDGQINYDEFVKVMMAK. 11 residues coordinate Ca(2+): cysteine 2, glutamate 7, aspartate 32, aspartate 34, asparagine 36, threonine 38, glutamate 43, aspartate 69, aspartate 71, asparagine 73, and glutamate 80. Lysine 91 is modified (N6,N6,N6-trimethyllysine). Aspartate 105, aspartate 107, aspartate 109, glutamine 111, and glutamate 116 together coordinate Ca(2+).

Belongs to the calmodulin family. In terms of tissue distribution, not detected in the organs tested.

Calmodulin mediates the control of a large number of enzymes, ion channels and other proteins by Ca(2+). Among the enzymes to be stimulated by the calmodulin-Ca(2+) complex are a number of protein kinases and phosphatases. This chain is Putative calmodulin-3 (PCM3), found in Solanum tuberosum (Potato).